The sequence spans 248 residues: Pyridoxine 5'-phosphate synthase (248 aa).

N7 serves as a coordination point for 3-amino-2-oxopropyl phosphate. 9-10 (DH) is a binding site for 1-deoxy-D-xylulose 5-phosphate. Residue R18 coordinates 3-amino-2-oxopropyl phosphate. The active-site Proton acceptor is H52. Residues R54 and H59 each coordinate 1-deoxy-D-xylulose 5-phosphate. The Proton acceptor role is filled by E79. T109 provides a ligand contact to 1-deoxy-D-xylulose 5-phosphate. H201 (proton donor) is an active-site residue. Residues G202 and 223 to 224 (GH) contribute to the 3-amino-2-oxopropyl phosphate site.

Belongs to the PNP synthase family. In terms of assembly, homooctamer; tetramer of dimers.

Its subcellular location is the cytoplasm. The enzyme catalyses 3-amino-2-oxopropyl phosphate + 1-deoxy-D-xylulose 5-phosphate = pyridoxine 5'-phosphate + phosphate + 2 H2O + H(+). Its pathway is cofactor biosynthesis; pyridoxine 5'-phosphate biosynthesis; pyridoxine 5'-phosphate from D-erythrose 4-phosphate: step 5/5. Functionally, catalyzes the complicated ring closure reaction between the two acyclic compounds 1-deoxy-D-xylulose-5-phosphate (DXP) and 3-amino-2-oxopropyl phosphate (1-amino-acetone-3-phosphate or AAP) to form pyridoxine 5'-phosphate (PNP) and inorganic phosphate. The sequence is that of Pyridoxine 5'-phosphate synthase from Opitutus terrae (strain DSM 11246 / JCM 15787 / PB90-1).